Here is a 102-residue protein sequence, read N- to C-terminus: uncharacterized protein (102 aa).

This is an uncharacterized protein from Haemophilus influenzae (strain ATCC 51907 / DSM 11121 / KW20 / Rd).